Here is a 494-residue protein sequence, read N- to C-terminus: ATP synthase subunit alpha, chloroplastic (494 aa).

170 to 177 (GDRQTGKT) lines the ATP pocket.

The protein belongs to the ATPase alpha/beta chains family. As to quaternary structure, F-type ATPases have 2 components, CF(1) - the catalytic core - and CF(0) - the membrane proton channel. CF(1) has five subunits: alpha(3), beta(3), gamma(1), delta(1), epsilon(1). CF(0) has four main subunits: a, b, b' and c.

The protein localises to the plastid. The protein resides in the chloroplast thylakoid membrane. The enzyme catalyses ATP + H2O + 4 H(+)(in) = ADP + phosphate + 5 H(+)(out). Produces ATP from ADP in the presence of a proton gradient across the membrane. The alpha chain is a regulatory subunit. In Pinus thunbergii (Japanese black pine), this protein is ATP synthase subunit alpha, chloroplastic.